Reading from the N-terminus, the 282-residue chain is D-arabinitol 2-dehydrogenase [ribulose-forming] (282 aa).

Leu-32 and Asn-53 together coordinate NADP(+). Ser-170 serves as the catalytic Proton donor. NADP(+)-binding residues include Tyr-185, Lys-189, Ile-218, and Thr-220. The active-site Proton acceptor is the Tyr-185. The active-site Lowers pKa of active site Tyr is Lys-189.

The protein belongs to the short-chain dehydrogenases/reductases (SDR) family.

It catalyses the reaction D-arabinitol + NAD(+) = D-ribulose + NADH + H(+). It participates in carbohydrate metabolism; D-arabinitol metabolism. In terms of biological role, catalyzes the NAD(+)-dependent oxidation of D-arabinitol at carbon 4 to produce D-ribulose. The chain is D-arabinitol 2-dehydrogenase [ribulose-forming] (ARD) from Candida tropicalis (Yeast).